The chain runs to 156 residues: ATP synthase subunit b (156 aa).

The chain crosses the membrane as a helical span at residues 7 to 29; it reads LIGQSITFIFFVWFSMKFVWPPI.

This sequence belongs to the ATPase B chain family. F-type ATPases have 2 components, F(1) - the catalytic core - and F(0) - the membrane proton channel. F(1) has five subunits: alpha(3), beta(3), gamma(1), delta(1), epsilon(1). F(0) has three main subunits: a(1), b(2) and c(10-14). The alpha and beta chains form an alternating ring which encloses part of the gamma chain. F(1) is attached to F(0) by a central stalk formed by the gamma and epsilon chains, while a peripheral stalk is formed by the delta and b chains.

The protein resides in the cell inner membrane. F(1)F(0) ATP synthase produces ATP from ADP in the presence of a proton or sodium gradient. F-type ATPases consist of two structural domains, F(1) containing the extramembraneous catalytic core and F(0) containing the membrane proton channel, linked together by a central stalk and a peripheral stalk. During catalysis, ATP synthesis in the catalytic domain of F(1) is coupled via a rotary mechanism of the central stalk subunits to proton translocation. Its function is as follows. Component of the F(0) channel, it forms part of the peripheral stalk, linking F(1) to F(0). The sequence is that of ATP synthase subunit b from Thiobacillus denitrificans (strain ATCC 25259 / T1).